A 142-amino-acid chain; its full sequence is Hemoglobin subunit alpha-3 (142 aa).

Residues 2–142 (VLSAADKSNV…VSTVLTSKYR (141 aa)) form the Globin domain. Residue His59 participates in O2 binding. Residue His88 participates in heme b binding.

Belongs to the globin family. As to quaternary structure, heterotetramer of two alpha chains and two beta chains. Red blood cells.

Its function is as follows. Involved in oxygen transport from the lung to the various peripheral tissues. This is Hemoglobin subunit alpha-3 from Bubalus bubalis (Domestic water buffalo).